The chain runs to 171 residues: Putative defense protein (171 aa).

A signal peptide spans M1–A23. A Reelin domain is found at R24–S171. C33 and C110 are oxidised to a cystine. N41 is a glycosylation site (N-linked (GlcNAc...) asparagine).

The protein belongs to the insect defense protein family.

The protein localises to the secreted. In terms of biological role, may have antimicrobial activity. The chain is Putative defense protein from Bombyx mori (Silk moth).